The chain runs to 131 residues: uncharacterized protein (131 aa).

A signal peptide spans Met-1–Gly-26.

This is an uncharacterized protein from Bacillus subtilis (strain 168).